Consider the following 402-residue polypeptide: Ferrochelatase, mitochondrial (402 aa).

The N-terminal 33 residues, 1–33 (MAAAGRAARPLVAGGRQLRVPLRWRGQVAAAAP), are a transit peptide targeting the mitochondrion. R94, Y102, and S109 together coordinate protoporphyrin IX. C175 contacts [2Fe-2S] cluster. Residues H209 and D362 contribute to the active site. Residues C382, C385, and C390 each coordinate [2Fe-2S] cluster.

This sequence belongs to the ferrochelatase family. As to quaternary structure, homodimer. Homotetramer. [2Fe-2S] cluster is required as a cofactor.

It localises to the mitochondrion inner membrane. It catalyses the reaction heme b + 2 H(+) = protoporphyrin IX + Fe(2+). Its pathway is porphyrin-containing compound metabolism; protoheme biosynthesis; protoheme from protoporphyrin-IX: step 1/1. Its function is as follows. Catalyzes the ferrous insertion into protoporphyrin IX. The polypeptide is Ferrochelatase, mitochondrial (Gallus gallus (Chicken)).